Consider the following 332-residue polypeptide: Transcription factor HBP-1b(c38) (332 aa).

The disordered stretch occupies residues 1–48 (MAEASPRTETSTDDTDENLMLEPGNAALAVVSDSSDRSRDKNGDQKTM). A compositionally biased stretch (basic and acidic residues) spans 34 to 47 (SSDRSRDKNGDQKT). In terms of domain architecture, bZIP spans 44 to 107 (DQKTMRRLAQ…SSADQSHSMS (64 aa)). The segment at 46–66 (KTMRRLAQNREAARKSRLRKK) is basic motif. The stretch at 47 to 142 (TMRRLAQNRE…RAAVNAHAGD (96 aa)) forms a coiled coil. The interval 72–86 (LENSRLKLTQLEQEL) is leucine-zipper. Positions 111 to 329 (ALAFDTEYAR…RALSSLWLAR (219 aa)) constitute a DOG1 domain.

It belongs to the bZIP family. As to quaternary structure, binds DNA as a dimer.

Its subcellular location is the nucleus. Transcriptional activator that binds specifically to the DNA sequence 5'-TGACG-3'. Recognizes ocs elements like the as-1 motif of the cauliflower mosaic virus 35S promoter. Binding to the as-1-like cis elements mediate auxin- and salicylic acid-inducible transcription. Binds to the hexamer motif 5'-ACGTCA-3' of histone gene promoters. The polypeptide is Transcription factor HBP-1b(c38) (Triticum aestivum (Wheat)).